Here is a 415-residue protein sequence, read N- to C-terminus: Cysteate synthase (415 aa).

The residue at position 104 (lysine 104) is an N6-(pyridoxal phosphate)lysine. Residues asparagine 131 and threonine 376 each contribute to the pyridoxal 5'-phosphate site.

It belongs to the threonine synthase family. Cysteate synthase subfamily. In terms of assembly, homotrimer. Pyridoxal 5'-phosphate is required as a cofactor.

It carries out the reaction O-phospho-L-serine + sulfite + H(+) = L-cysteate + phosphate. It participates in cofactor biosynthesis; coenzyme M biosynthesis. Its function is as follows. Specifically catalyzes the beta-elimination of phosphate from L-phosphoserine and the beta-addition of sulfite to the dehydroalanine intermediate to produce L-cysteate. In Methanothrix thermoacetophila (strain DSM 6194 / JCM 14653 / NBRC 101360 / PT) (Methanosaeta thermophila), this protein is Cysteate synthase.